The sequence spans 144 residues: Apidaecins type 22 (144 aa).

Residues 1–19 (MKNFALAILVVTFVVAVFG) form the signal peptide. Propeptides lie at residues 20–42 (NTNL…EAEP), 63–70 (EAEPEAEP), 91–98 (EAEPEAEP), and 119–126 (EAEPEAEP). The tract at residues 20–144 (NTNLDPPTRP…PQPRPPHPRI (125 aa)) is disordered. Residues 134 to 144 (IPQPRPPHPRI) are compositionally biased toward pro residues.

Belongs to the apidaecin family.

It is found in the secreted. Apidaecins have bactericidal activity; predominantly against Gram-negative bacteria. They seem to interfere with cell propagation. The sequence is that of Apidaecins type 22 from Apis mellifera (Honeybee).